The primary structure comprises 406 residues: 8-amino-7-oxononanoate synthase (406 aa).

Substrate is bound at residue Arg20. 116-117 (GY) provides a ligand contact to pyridoxal 5'-phosphate. His141 lines the substrate pocket. Pyridoxal 5'-phosphate-binding residues include Ser187, His215, and Thr243. N6-(pyridoxal phosphate)lysine is present on Lys246. Thr366 lines the substrate pocket.

This sequence belongs to the class-II pyridoxal-phosphate-dependent aminotransferase family. BioF subfamily. As to quaternary structure, homodimer. It depends on pyridoxal 5'-phosphate as a cofactor.

The enzyme catalyses 6-carboxyhexanoyl-[ACP] + L-alanine + H(+) = (8S)-8-amino-7-oxononanoate + holo-[ACP] + CO2. The protein operates within cofactor biosynthesis; biotin biosynthesis. Its function is as follows. Catalyzes the decarboxylative condensation of pimeloyl-[acyl-carrier protein] and L-alanine to produce 8-amino-7-oxononanoate (AON), [acyl-carrier protein], and carbon dioxide. The protein is 8-amino-7-oxononanoate synthase of Cupriavidus metallidurans (strain ATCC 43123 / DSM 2839 / NBRC 102507 / CH34) (Ralstonia metallidurans).